Consider the following 252-residue polypeptide: Insulin-induced gene 1 protein (252 aa).

Residues 1–59 (MPRLESGAWSCSCAARARHAARPGEAAPKADAMQSPSPSAGRAEREASGGSATTWRQHL) lie on the Cytoplasmic side of the membrane. Residues 22-48 (RPGEAAPKADAMQSPSPSAGRAEREAS) are disordered. Residues 60-82 (VQRSVVLFVVGAFMALVLNLLQI) traverse the membrane as a helical segment. Residues 83 to 101 (QRNVTLFPDEVIATLFSSA) are Extracellular-facing. The chain crosses the membrane as a helical span at residues 102–119 (WWVPPCCGTAAAVVGLLY). The Cytoplasmic portion of the chain corresponds to 120 to 134 (PCIDSHLGEPHKFKR). A helical membrane pass occupies residues 135-157 (EWASVMRCIAVFVGINHASAKLD). The Extracellular portion of the chain corresponds to 158–160 (FAN). A helical membrane pass occupies residues 161-179 (NVQLSLTLAALSLGLWWTF). Topologically, residues 180–184 (DRSRS) are cytoplasmic. A helical transmembrane segment spans residues 185 to 206 (GLGLGITIAFVATLITQFLVYN). At 207 to 220 (GVYQYTSPDFLYIR) the chain is on the extracellular side. The chain crosses the membrane as a helical span at residues 221-238 (SWLPCIFFSGGVTVGNIG). Residues 239–252 (RQLAMGIPEKPHND) are Cytoplasmic-facing. A KxHxx motif is present at residues 246-252 (PEKPHND).

The protein belongs to the INSIG family. Interacts with SCAP; interaction is direct and only takes place in the presence of sterols; it prevents interaction between SCAP and the coat protein complex II (COPII). Associates with the SCAP-SREBP complex; association is mediated via its interaction with SCAP and only takes place in the presence of sterols.

It localises to the endoplasmic reticulum membrane. Functionally, oxysterol-binding protein that mediates feedback control of cholesterol synthesis by controlling both endoplasmic reticulum to Golgi transport of SCAP and degradation of HMGCR. Acts as a negative regulator of cholesterol biosynthesis by mediating the retention of the SCAP-SREBP complex in the endoplasmic reticulum, thereby blocking the processing of sterol regulatory element-binding proteins (SREBPs). Binds oxysterol, including 25-hydroxycholesterol, regulating interaction with SCAP and retention of the SCAP-SREBP complex in the endoplasmic reticulum. In presence of oxysterol, interacts with SCAP, retaining the SCAP-SREBP complex in the endoplasmic reticulum, thereby preventing SCAP from escorting SREBPs to the Golgi. Sterol deprivation reduces oxysterol-binding, disrupting the interaction between INSIG1 and SCAP, thereby promoting Golgi transport of the SCAP-SREBP complex, followed by processing and nuclear translocation of SREBPs. Also regulates cholesterol synthesis by regulating degradation of HMGCR. The protein is Insulin-induced gene 1 protein of Gallus gallus (Chicken).